We begin with the raw amino-acid sequence, 352 residues long: Uroporphyrinogen decarboxylase (352 aa).

Substrate-binding positions include 26–30 (RQAGR), D76, Y153, S208, and H323.

The protein belongs to the uroporphyrinogen decarboxylase family. Homodimer.

It is found in the cytoplasm. It catalyses the reaction uroporphyrinogen III + 4 H(+) = coproporphyrinogen III + 4 CO2. The protein operates within porphyrin-containing compound metabolism; protoporphyrin-IX biosynthesis; coproporphyrinogen-III from 5-aminolevulinate: step 4/4. Its function is as follows. Catalyzes the decarboxylation of four acetate groups of uroporphyrinogen-III to yield coproporphyrinogen-III. The polypeptide is Uroporphyrinogen decarboxylase (Prochlorococcus marinus (strain NATL1A)).